Here is a 193-residue protein sequence, read N- to C-terminus: Acyl carrier protein phosphodiesterase (193 aa).

This sequence belongs to the AcpH family.

It carries out the reaction holo-[ACP] + H2O = apo-[ACP] + (R)-4'-phosphopantetheine + H(+). In terms of biological role, converts holo-ACP to apo-ACP by hydrolytic cleavage of the phosphopantetheine prosthetic group from ACP. The chain is Acyl carrier protein phosphodiesterase from Pectobacterium atrosepticum (strain SCRI 1043 / ATCC BAA-672) (Erwinia carotovora subsp. atroseptica).